An 89-amino-acid polypeptide reads, in one-letter code: Small ribosomal subunit protein uS15 (89 aa).

This sequence belongs to the universal ribosomal protein uS15 family. Part of the 30S ribosomal subunit. Forms a bridge to the 50S subunit in the 70S ribosome, contacting the 23S rRNA.

Its function is as follows. One of the primary rRNA binding proteins, it binds directly to 16S rRNA where it helps nucleate assembly of the platform of the 30S subunit by binding and bridging several RNA helices of the 16S rRNA. Forms an intersubunit bridge (bridge B4) with the 23S rRNA of the 50S subunit in the ribosome. The sequence is that of Small ribosomal subunit protein uS15 from Desulfotalea psychrophila (strain LSv54 / DSM 12343).